A 125-amino-acid chain; its full sequence is Small ribosomal subunit protein uS12 (125 aa).

Residue D89 is modified to 3-methylthioaspartic acid.

This sequence belongs to the universal ribosomal protein uS12 family. In terms of assembly, part of the 30S ribosomal subunit. Contacts proteins S8 and S17. May interact with IF1 in the 30S initiation complex.

Its function is as follows. With S4 and S5 plays an important role in translational accuracy. Functionally, interacts with and stabilizes bases of the 16S rRNA that are involved in tRNA selection in the A site and with the mRNA backbone. Located at the interface of the 30S and 50S subunits, it traverses the body of the 30S subunit contacting proteins on the other side and probably holding the rRNA structure together. The combined cluster of proteins S8, S12 and S17 appears to hold together the shoulder and platform of the 30S subunit. This chain is Small ribosomal subunit protein uS12, found in Bordetella petrii (strain ATCC BAA-461 / DSM 12804 / CCUG 43448).